The chain runs to 429 residues: Ribosomal RNA small subunit methyltransferase B (429 aa).

Residues 254-260 (CAAPGGK), aspartate 277, aspartate 303, and aspartate 322 each bind S-adenosyl-L-methionine. Cysteine 375 acts as the Nucleophile in catalysis. The segment at 397–419 (ALSETGTPDQPGQQNLPGGEEGD) is disordered. The span at 400 to 412 (ETGTPDQPGQQNL) shows a compositional bias: polar residues.

Belongs to the class I-like SAM-binding methyltransferase superfamily. RsmB/NOP family.

It is found in the cytoplasm. The catalysed reaction is cytidine(967) in 16S rRNA + S-adenosyl-L-methionine = 5-methylcytidine(967) in 16S rRNA + S-adenosyl-L-homocysteine + H(+). In terms of biological role, specifically methylates the cytosine at position 967 (m5C967) of 16S rRNA. The polypeptide is Ribosomal RNA small subunit methyltransferase B (Salmonella newport (strain SL254)).